Here is a 253-residue protein sequence, read N- to C-terminus: Imidazole glycerol phosphate synthase subunit HisF (253 aa).

Residues aspartate 11 and aspartate 130 contribute to the active site.

It belongs to the HisA/HisF family. As to quaternary structure, heterodimer of HisH and HisF.

It localises to the cytoplasm. It carries out the reaction 5-[(5-phospho-1-deoxy-D-ribulos-1-ylimino)methylamino]-1-(5-phospho-beta-D-ribosyl)imidazole-4-carboxamide + L-glutamine = D-erythro-1-(imidazol-4-yl)glycerol 3-phosphate + 5-amino-1-(5-phospho-beta-D-ribosyl)imidazole-4-carboxamide + L-glutamate + H(+). It functions in the pathway amino-acid biosynthesis; L-histidine biosynthesis; L-histidine from 5-phospho-alpha-D-ribose 1-diphosphate: step 5/9. In terms of biological role, IGPS catalyzes the conversion of PRFAR and glutamine to IGP, AICAR and glutamate. The HisF subunit catalyzes the cyclization activity that produces IGP and AICAR from PRFAR using the ammonia provided by the HisH subunit. The protein is Imidazole glycerol phosphate synthase subunit HisF of Paracoccus denitrificans (strain Pd 1222).